The primary structure comprises 427 residues: Gamma-glutamyl phosphate reductase (427 aa).

It belongs to the gamma-glutamyl phosphate reductase family.

It localises to the cytoplasm. The catalysed reaction is L-glutamate 5-semialdehyde + phosphate + NADP(+) = L-glutamyl 5-phosphate + NADPH + H(+). It functions in the pathway amino-acid biosynthesis; L-proline biosynthesis; L-glutamate 5-semialdehyde from L-glutamate: step 2/2. Functionally, catalyzes the NADPH-dependent reduction of L-glutamate 5-phosphate into L-glutamate 5-semialdehyde and phosphate. The product spontaneously undergoes cyclization to form 1-pyrroline-5-carboxylate. In Brucella ovis (strain ATCC 25840 / 63/290 / NCTC 10512), this protein is Gamma-glutamyl phosphate reductase.